Consider the following 625-residue polypeptide: Phosphomethylpyrimidine synthase (625 aa).

Substrate contacts are provided by residues Asn237, Met266, Tyr295, His331, 351-353, 392-395, and Glu431; these read SRG and DGLR. His435 contributes to the Zn(2+) binding site. Tyr458 provides a ligand contact to substrate. His499 provides a ligand contact to Zn(2+). [4Fe-4S] cluster is bound by residues Cys579, Cys582, and Cys587.

This sequence belongs to the ThiC family. Homodimer. The cofactor is [4Fe-4S] cluster.

The catalysed reaction is 5-amino-1-(5-phospho-beta-D-ribosyl)imidazole + S-adenosyl-L-methionine = 4-amino-2-methyl-5-(phosphooxymethyl)pyrimidine + CO + 5'-deoxyadenosine + formate + L-methionine + 3 H(+). It participates in cofactor biosynthesis; thiamine diphosphate biosynthesis. In terms of biological role, catalyzes the synthesis of the hydroxymethylpyrimidine phosphate (HMP-P) moiety of thiamine from aminoimidazole ribotide (AIR) in a radical S-adenosyl-L-methionine (SAM)-dependent reaction. The sequence is that of Phosphomethylpyrimidine synthase from Cupriavidus metallidurans (strain ATCC 43123 / DSM 2839 / NBRC 102507 / CH34) (Ralstonia metallidurans).